We begin with the raw amino-acid sequence, 76 residues long: Zinc finger protein 706 (76 aa).

The span at 1-13 (MARGQQKIQSQQK) shows a compositional bias: low complexity. 2 disordered regions span residues 1-32 (MARG…QKAA) and 53-76 (TFKQ…DVQA). Basic residues predominate over residues 14–25 (NAKKQAGQKKKQ). The C2H2-type zinc-finger motif lies at 39 to 62 (YTCTVCRTQMPDPKTFKQHFESKH). A compositionally biased stretch (basic and acidic residues) spans 53-62 (TFKQHFESKH).

It localises to the cytoplasm. It is found in the nucleus. Transcription repressor involved in the exit of embryonic stem cells (ESCs) from self-renewal. Acts by repressing expression of KLF4. This is Zinc finger protein 706 from Homo sapiens (Human).